Consider the following 184-residue polypeptide: Shikimate kinase (184 aa).

17 to 22 (GAGKTT) is a binding site for ATP. Position 21 (Thr21) interacts with Mg(2+). Substrate-binding residues include Asp39, Arg63, and Gly85. Arg123 provides a ligand contact to ATP. Residue Arg142 coordinates substrate.

Belongs to the shikimate kinase family. Monomer. Mg(2+) is required as a cofactor.

Its subcellular location is the cytoplasm. It carries out the reaction shikimate + ATP = 3-phosphoshikimate + ADP + H(+). The protein operates within metabolic intermediate biosynthesis; chorismate biosynthesis; chorismate from D-erythrose 4-phosphate and phosphoenolpyruvate: step 5/7. Its function is as follows. Catalyzes the specific phosphorylation of the 3-hydroxyl group of shikimic acid using ATP as a cosubstrate. This chain is Shikimate kinase, found in Burkholderia lata (strain ATCC 17760 / DSM 23089 / LMG 22485 / NCIMB 9086 / R18194 / 383).